A 921-amino-acid polypeptide reads, in one-letter code: Respiratory burst oxidase homolog protein D (921 aa).

Positions 1–71 (MKMRRGNSSN…RSNSVAGGRG (71 aa)) are disordered. Over 1–376 (MKMRRGNSSN…KYFILDNWQR (376 aa)) the chain is Cytoplasmic. Phosphoserine occurs at positions 8, 9, 26, and 39. Residues 21–31 (NSDTNSDTESI) show a composition bias toward polar residues. Residues 44-53 (RPKRASKKNA) are compositionally biased toward basic residues. EF-hand-like regions lie at residues 193-203 (SADSNGLLLSA) and 230-241 (NNVSGDAITKEQ). EF-hand domains are found at residues 253-288 (SFDA…SASA) and 297-332 (QAKE…APNQ). The Ca(2+) site is built by Asp266, Asp268, Asp270, Arg272, and Glu277. Ser339, Ser343, and Ser347 each carry phosphoserine. The chain crosses the membrane as a helical span at residues 377–397 (LWIMMLWLGICGGLFTYKFIQ). The Extracellular portion of the chain corresponds to 398-461 (YKNKAAYGVM…FDDSLNFHKV (64 aa)). The Ferric oxidoreductase domain occupies 415–572 (KGGAETLKFN…LFIIVYALLI (158 aa)). The chain crosses the membrane as a helical span at residues 462 to 482 (IASGIVVGVLLHAGAHLTCDF). Topologically, residues 483-516 (PRLIAADEDTYEPMEKYFGDQPTSYWWFVKGVEG) are cytoplasmic. The helical transmembrane segment at 517-537 (WTGIVMVVLMAIAFTLATPWF) threads the bilayer. Topologically, residues 538-559 (RRNKLNLPNFLKKLTGFNAFWY) are extracellular. Residues 560-580 (THHLFIIVYALLIVHGIKLYL) form a helical membrane-spanning segment. At 581-588 (TKIWYQKT) the chain is on the cytoplasmic side. The chain crosses the membrane as a helical span at residues 589 to 606 (TWMYLAVPILLYASERLL). The Extracellular portion of the chain corresponds to 607–734 (RAFRSSIKPV…PYGAPAQDYK (128 aa)). Positions 611 to 732 (SSIKPVKMIK…DGPYGAPAQD (122 aa)) constitute an FAD-binding FR-type domain. Residues 735–755 (KYDVVLLVGLGIGATPMISIL) form a helical membrane-spanning segment. Residues 756 to 921 (KDIINNMKGP…TKFDFHKENF (166 aa)) lie on the Cytoplasmic side of the membrane.

It belongs to the RBOH (TC 5.B.1.3) family. Monomer and homodimer. Interacts with BIK1 and FLS2. Interacts with PBL13. Binds to SIK1 upon flagellin perception and becomes activated by phosphorylation. Phosphorylated at Ser-39, Ser-343 and Ser-347 by BIK1 upon flagellin (flg22) treatment. Activated by phosphorylation at Ser-347 mediated by SIK1 and at Ser-8, Ser-9 and Ser-339 upon flagellin (e.g. flg22) perception. In terms of tissue distribution, more abundant in roots than in leaves, stems or inflorescences. Expressed in mesophyll and guard cells.

The protein localises to the membrane. With respect to regulation, inhibited by diphenylene iodinium (DPI). In terms of biological role, calcium-dependent NADPH oxidase that generates superoxide. Involved in the generation of reactive oxygen species (ROS) during incompatible interactions with pathogens, in response to pathogen-associated molecular pattern (PAMP)-triggered immunity (PTI) signaling and in UV-B and abscisic acid ROS-dependent signaling and via SIK1 mediated activation by phosphorylation. Might be required for ROS signal amplification during light stress. The sequence is that of Respiratory burst oxidase homolog protein D from Arabidopsis thaliana (Mouse-ear cress).